The primary structure comprises 160 residues: MTDNNAPGAMTFALKLLGLRSHSKDELKRKLLKKGYSAEGIEPVIEKLSRMGALDDHAFGMEVIRSRSRRKPSGRLKIVAELRKKGVAETIISELLKEYDSVALCHRAAEKKLASLREMSEADRKRKLEVFLSNRGFEWQEIQSALRLLVLPGADDDEPC.

This sequence belongs to the RecX family.

Its subcellular location is the cytoplasm. In terms of biological role, modulates RecA activity. This is Regulatory protein RecX from Pelodictyon phaeoclathratiforme (strain DSM 5477 / BU-1).